The following is a 526-amino-acid chain: Zinc finger protein 69 homolog (526 aa).

Residues 1–39 (MPQQLLITLPTEASTWVKLQHPKKAVEGAPLWEDVTKMF) form the SCAN box domain. A KRAB domain is found at 76–147 (LTFKDISIDF…EKEGPGDPSS (72 aa)). 9 consecutive C2H2-type zinc fingers follow at residues 271 to 293 (YECN…MRIH), 299 to 321 (FRCK…QRIH), 327 to 349 (FECE…HRTH), 355 to 377 (YVCD…LRTH), 383 to 405 (FTCN…IRIH), 411 to 433 (YACT…QRIH), 439 to 461 (YKCK…KTVH), 467 to 489 (YECN…QRHH), and 495 to 517 (YECN…HEIH).

The protein belongs to the krueppel C2H2-type zinc-finger protein family. In terms of tissue distribution, expressed in visceral and subcutaneous adipose tissue.

It localises to the nucleus. Functionally, putative transcription factor that appears to regulate lipid metabolism. This Homo sapiens (Human) protein is Zinc finger protein 69 homolog (ZFP69).